A 213-amino-acid polypeptide reads, in one-letter code: 3-isopropylmalate dehydratase small subunit (213 aa).

It belongs to the LeuD family. LeuD type 1 subfamily. As to quaternary structure, heterodimer of LeuC and LeuD.

The catalysed reaction is (2R,3S)-3-isopropylmalate = (2S)-2-isopropylmalate. It participates in amino-acid biosynthesis; L-leucine biosynthesis; L-leucine from 3-methyl-2-oxobutanoate: step 2/4. Its function is as follows. Catalyzes the isomerization between 2-isopropylmalate and 3-isopropylmalate, via the formation of 2-isopropylmaleate. The chain is 3-isopropylmalate dehydratase small subunit from Neisseria gonorrhoeae (strain ATCC 700825 / FA 1090).